We begin with the raw amino-acid sequence, 352 residues long: MVPLVRGAGGSHQWLAAVLLGLCCLLPAGRLAAPGGDFPGAAADSLVVRKGDTAVLRCYLEDGASKGAWLNRSSIIFAGSDKWSVDPRVSIATANRREYSLQIQDVDVTDDGPYTCSVQTQHTPRTMQVHLTVQVSPKIFRISSDIVVNEGSNVTLVCLATGKPEPSISWRHISPSAKPFESGQYLDIYGITRDQAGEYECSAENDVSVPDVKKVKVTVNFAPTIQELKSSGVMLGGNGLIRCEGAGVPAPVFEWYRGERKLISGQQGITIKNYSTRSLLTVTNVTEEHFGNYTCVAANKLGMTNASLPLNPPSTAQYGITGDAEVLFSCWYLVLTLSSLTSIFYLKNIILH.

The signal sequence occupies residues 1-35 (MVPLVRGAGGSHQWLAAVLLGLCCLLPAGRLAAPG). Ig-like C2-type domains lie at 36 to 132 (GDFP…VHLT), 137 to 219 (PKIF…KVTV), and 223 to 311 (PTIQ…LPLN). Cysteine 58 and cysteine 116 form a disulfide bridge. N-linked (GlcNAc...) asparagine glycosylation is found at asparagine 71 and asparagine 153. 2 cysteine pairs are disulfide-bonded: cysteine 158-cysteine 201 and cysteine 243-cysteine 295. N-linked (GlcNAc...) asparagine glycans are attached at residues asparagine 273, asparagine 284, asparagine 292, and asparagine 305. Glycine 322 carries GPI-anchor amidated glycine lipidation. The propeptide at 323–352 (DAEVLFSCWYLVLTLSSLTSIFYLKNIILH) is removed in mature form.

The protein belongs to the immunoglobulin superfamily. IgLON family. Interacts with CEPU-1 and LAMP. Glycosylated. As to expression, expressed in embryonic retina, telencephalon, tectum, cerebellum and diencephalon (at protein level).

Its subcellular location is the cell membrane. May be involved in cell-adhesion. May participate in the regulation of neurite outgrowth in the developing brain. In Gallus gallus (Chicken), this protein is Neuronal growth regulator 1 (NEGR1).